Reading from the N-terminus, the 251-residue chain is 1-(5-phosphoribosyl)-5-[(5-phosphoribosylamino)methylideneamino] imidazole-4-carboxamide isomerase (251 aa).

Catalysis depends on aspartate 8, which acts as the Proton acceptor. Aspartate 131 functions as the Proton donor in the catalytic mechanism.

The protein belongs to the HisA/HisF family.

The protein localises to the cytoplasm. It carries out the reaction 1-(5-phospho-beta-D-ribosyl)-5-[(5-phospho-beta-D-ribosylamino)methylideneamino]imidazole-4-carboxamide = 5-[(5-phospho-1-deoxy-D-ribulos-1-ylimino)methylamino]-1-(5-phospho-beta-D-ribosyl)imidazole-4-carboxamide. Its pathway is amino-acid biosynthesis; L-histidine biosynthesis; L-histidine from 5-phospho-alpha-D-ribose 1-diphosphate: step 4/9. The polypeptide is 1-(5-phosphoribosyl)-5-[(5-phosphoribosylamino)methylideneamino] imidazole-4-carboxamide isomerase (Burkholderia cenocepacia (strain HI2424)).